A 323-amino-acid chain; its full sequence is AA9 family lytic polysaccharide monooxygenase A (323 aa).

The N-terminal stretch at 1-19 (MKSFISLLGLSFLTCHASA) is a signal peptide. Residues His-20 and His-90 each coordinate Cu(2+). Residues Cys-59 and Cys-175 are joined by a disulfide bond. O2 contacts are provided by His-161 and Gln-170. Tyr-172 contributes to the Cu(2+) binding site. Asn-215 carries an N-linked (GlcNAc...) asparagine glycan. The region spanning 287-323 (AVVQKFGQCGGQGWTGGTTCVAGSTCTATNAYYSQCL) is the CBM1 domain.

It belongs to the polysaccharide monooxygenase AA9 family. Cu(2+) serves as cofactor.

It is found in the secreted. It carries out the reaction [(1-&gt;4)-beta-D-glucosyl]n+m + reduced acceptor + O2 = 4-dehydro-beta-D-glucosyl-[(1-&gt;4)-beta-D-glucosyl]n-1 + [(1-&gt;4)-beta-D-glucosyl]m + acceptor + H2O.. Functionally, lytic polysaccharide monooxygenase (LPMO) that depolymerizes crystalline and amorphous polysaccharides via the oxidation of scissile alpha- or beta-(1-4)-glycosidic bonds, yielding C1 and C4 oxidation products. Catalysis by LPMOs requires the reduction of the active-site copper from Cu(II) to Cu(I) by a reducing agent and H(2)O(2) or O(2) as a cosubstrate. This is AA9 family lytic polysaccharide monooxygenase A from Botryotinia fuckeliana (strain B05.10) (Noble rot fungus).